Here is a 2548-residue protein sequence, read N- to C-terminus: MNINDGGRRRFEDNEHTLRIYPGAISEGTIYCPIPARKNSTAAEVIESLINKLHLDKTKCYVLAEVKEFGGEEWILNPTDCPVQRMMLWPRMALENRLSGEDYRFLLREKNLDGSIHYGSLQSWLRVTEERRRMMERGFLPQPQQKDFDDLCSLPDLNEKTLLENLRNRFKHEKIYTYVGSILIVINPFKFLPIYNPKYVKMYDNHQLGKLEPHIYAVADVAYHAMLQRKKNQCIVISGESGSGKTQSTNFLIHHLTALSQKGFASGVEQIILGAGPVLEAFGNAKTAHNNNSSRFGKFIQVNYQETGTVLGAYVEKYLLEKSRLVYQEHNERNYHVFYYLLAGASEDERSAFHLKQPEEYHYLNQITKKPLRQSWDDYCYDSEPDCFTVEGEDLRHDFERLQLAMEMVGFLPKTRRQIFSLLSAILHLGNICYKKKTYRDDSIDICNPEVLPIVSELLEVKEEMLFEALVTRKTVTVGEKLILPYKLAEAVTVRNSMAKSLYSALFDWIVFRINHALLNSKDLEHNTKTLSIGVLDIFGFEDYENNSFEQFCINFANERLQHYFNQHIFKLEQEEYRTEGISWHNIDYIDNTCCINLISKKPTGLLHLLDEESNFPQATNQTLLDKFKHQHEDNSYIEFPAVMEPAFIIKHYAGKVKYGVKDFREKNTDHMRPDIVALLRSSKNAFISGMIGIDPVAVFRWAILRAFFRAMVAFREAGKRNIHRKTGHDDTAPCAILKSMDSFSFLQHPVHQRSLEILQRCKEEKYSITRKNPRTPLSDLQGMNALNEKNQHDTFDIAWNGRTGIRQSRLSSGTSLLDKDGIFANSTSSKLLERAHGILTRNKNFKSKPALPKHLLEVNSLKHLTRLTLQDRITKSLLHLHKKKKPPSISAQFQASLSKLMETLGQAEPYFVKCIRSNAEKLPLRFSDVLVLRQLRYTGMLETVRIRQSGYSSKYSFQDFVSHFHVLLPRNIIPSKFNIQDFFRKINLNPDNYQVGKTMVFLKEQERQHLQDLLHQEVLRRIILLQRWFRVLLCRQHFLHLRQASVIIQRFWRNYLNQKQVRDAAVQKDAFVMASAAALLQASWRAHLERQRYLELRAAAIVIQQKWRDYYRRRHMAAICIQARWKAYRESKRYQEQRKKIILLQSTCRGFRARQRFKALKEQRLRETKPEVGLVNIKGYGSLEIQGSDPSGWEDCSFDNRIKAIEECKSVIESNRISRESSVDCLKESPNKQQERAQSQSGVDLQEDVLVRERPRSLEDLHQKKVGRAKRESRRMRELEQAIFSLELLKVRSLGGISPSEDRRWSTELVPEGLQSPRGTPDSESSQGSLELLSYEESQKSKLESVISDEGDLQFPSPKISSSPKFDSRDNALSASNETSSAEHLKDGTMKEMVVCSSESITCKPQLKDSFISNSLPTFFYIPQQDPLKTNSQLDTSIQRNKLLENEDTAGEALTLDINRETRRYHCSGKDQIVPSLNTESSNPVLKKLEKLNTEKEERQKQLQQQNEKEMMEQIRQQTDILEKERKAFKTIEKPRIGECLVAPSSYQSKQRVERPSSLLSLNTSNKGELNVLGSLSLKDAALAQKDSSSAHLPPKDRPVTVFFERKGSPCQSSTVKELSKTDRMGTQLNVACKLSNNRISKREHFRPTQSYSHNSDDLSREGNARPIFFTPKDNMSIPLVSKEALNSKNPQLHKEDEPAWKPVKLAGPGQRETSQRFSSVDEQAKLHKTMSQGEITKLAVRQKASDSDIRPQRAKMRFWAKGKQGEKKTTRVKPTTQSEVSPLFAGTDVIPAHQFPDELAAYHPTPPLSPELPGSCRKEFKENKEPSPKAKRKRSVKISNVALDSMHWQNDSVQIIASVSDLKSMDEFLLKKVNDLDNEDSKKDTLVDVVFKKALKEFRQNIFSFYSSALAMDDGKSIRYKDLYALFEQILEKTMRLEQRDSLGESPVRVWVNTFKVFLDEYMNEFKTSDCTATKVPKTERKKRRKKETDLVEEHNGHIFKATQYSIPTYCEYCSSLIWIMDRASVCKLCKYACHKKCCLKTTAKCSKKYDPELSSRQFGVELSRLTSEDRTVPLVVEKLINYIEMHGLYTEGIYRKSGSTNKIKELRQGLDTDAESVNLDDYNIHVIASVFKQWLRDLPNPLMTFELYEEFLRAMGLQERKETIRGVYSVIDQLSRTHLNTLERLIFHLVRIALQEDTNRMSANALAIVFAPCILRCPDTTDPLQSVQDISKTTTCVELIVVEQMNKYKARLKDISSLEFAENKAKTRLSLIRRSMGKGRIRRGNYPGPSSPVVVRLPSVSDVSEETLTSEAAMETDITEQQQAAMQQEERVLTEQIENLQKEKEELTFEMLVLEPRASDDETLESEASIGTADSSENLNMESEYAISEKSERSLALSSLKTAGKSEPSSKLRKQLKKQQDSLDVVDSSVSSLCLSNTASSHGTRKLFQIYSKSPFYRAASGNEALGMEGPLGQTKFLEDKPQFISRGTFNPEKGKQKLKNVKNSPQKTKETPEGTVMSGRRKTVDPDCTSNQQLALFGNNEFMV.

One can recognise a Ras-associating domain in the interval Asn-14–Leu-112. Positions Lys-146 to His-1016 constitute a Myosin motor domain. A helical transmembrane segment spans residues Ile-175–Tyr-195. ATP is bound at residue Gly-239–Thr-246. Ser-755 carries the phosphoserine modification. Residues Leu-898 to Ala-920 are actin-binding. 5 consecutive IQ domains span residues Arg-1021–His-1041, Leu-1042–Ala-1071, Met-1074–Val-1103, Arg-1115–Leu-1144, and Gln-1138–Arg-1167. Residues Arg-1021–Lys-1162 form a neck or regulatory domain region. The tail stretch occupies residues Glu-1163–Lys-2511. Residues Ser-1223–Glu-1236 show a composition bias toward basic and acidic residues. The tract at residues Ser-1223–Val-1250 is disordered. Residues Ser-1242 and Ser-1258 each carry the phosphoserine modification. Residues Gln-1264–Lys-1291 adopt a coiled-coil conformation. 2 positions are modified to phosphoserine: Ser-1299 and Ser-1317. The segment at Ser-1299–Leu-1386 is disordered. Composition is skewed to low complexity over residues Ser-1324–Glu-1337 and Phe-1356–Lys-1366. Ser-1364 is modified (phosphoserine). A compositionally biased stretch (polar residues) spans Asn-1372–Ser-1381. Residues Val-1486–Thr-1532 are a coiled coil. Residues Tyr-1804–Arg-1836 form a disordered region. Residues Cys-1818 to Pro-1830 show a composition bias toward basic and acidic residues. Ser-1948 carries the post-translational modification Phosphoserine. 2 consecutive Phorbol-ester/DAG-type zinc fingers follow at residues Gly-1999–Cys-2048 and Leu-2068–Ser-2119. Residues Val-2063 to Tyr-2251 enclose the Rho-GAP domain. Ser-2294 carries the post-translational modification Phosphoserine. A coiled-coil region spans residues Ala-2315–Glu-2358. Disordered regions lie at residues Pro-2359–Asn-2383 and Ser-2401–Asp-2424. Ser-2464 is subject to Phosphoserine. A disordered region spans residues Arg-2490–Asp-2531.

This sequence belongs to the TRAFAC class myosin-kinesin ATPase superfamily. Myosin family. In terms of processing, phosphorylated by ALPK1 following monosodium urate monohydrate (MSU)-induced inflammation. As to expression, found to be expressed in testis and placenta and at lower levels in all the examined tissues with the exception of liver. Isoform 5: Found in leukocytes but not in brain, retina or testis.

The protein resides in the membrane. It is found in the cytoplasm. It localises to the synapse. The protein localises to the cell projection. Its subcellular location is the growth cone. Myosins are actin-based motor molecules with ATPase activity. Unconventional myosins serve in intracellular movements. Regulates Rho by stimulating it's GTPase activity in neurons. Required for the regulation of neurite branching and motor neuron axon guidance. This Homo sapiens (Human) protein is Unconventional myosin-IXa (MYO9A).